A 206-amino-acid polypeptide reads, in one-letter code: Homoserine/homoserine lactone efflux protein (206 aa).

Helical transmembrane passes span 5-25, 45-65, 68-88, 117-137, 148-168, and 182-202; these read WWFA…SGAI, GLQT…GTLF, SLLA…WLGI, FVNL…PQFI, LILG…YATL, and MKAL…LLAS.

It belongs to the Rht family.

The protein localises to the cell membrane. In terms of biological role, conducts the efflux of homoserine and homoserine lactone. The polypeptide is Homoserine/homoserine lactone efflux protein (rhtB) (Salmonella typhimurium (strain LT2 / SGSC1412 / ATCC 700720)).